A 128-amino-acid polypeptide reads, in one-letter code: RutC family protein BUsg_359 (128 aa).

The protein belongs to the RutC family.

The chain is RutC family protein BUsg_359 from Buchnera aphidicola subsp. Schizaphis graminum (strain Sg).